The following is a 263-amino-acid chain: Hydroxyethylthiazole kinase (263 aa).

Met41 is a binding site for substrate. 2 residues coordinate ATP: Lys117 and Ser163. Gly190 contacts substrate.

It belongs to the Thz kinase family. Mg(2+) serves as cofactor.

It catalyses the reaction 5-(2-hydroxyethyl)-4-methylthiazole + ATP = 4-methyl-5-(2-phosphooxyethyl)-thiazole + ADP + H(+). Its pathway is cofactor biosynthesis; thiamine diphosphate biosynthesis; 4-methyl-5-(2-phosphoethyl)-thiazole from 5-(2-hydroxyethyl)-4-methylthiazole: step 1/1. Functionally, catalyzes the phosphorylation of the hydroxyl group of 4-methyl-5-beta-hydroxyethylthiazole (THZ). The chain is Hydroxyethylthiazole kinase from Thermoanaerobacter sp. (strain X514).